A 930-amino-acid chain; its full sequence is MKLKETLNLGQTAFPMRAGLPNKEPQWQEAWDQADIYKKRQALNEGKPAFHLHDGPPYANGNIHVGHALNKISKDIIVRSKSMSGFRAPYVPGWDTHGLPIEQVLAKKGVKRKEMDLAEYLEMCRDYALSQVDKQRDDFKRLGVSADWENPYITLTPDYEADQVRVFGAMADKGYIYRGAKPVYWSWSSESALAEAEIEYHDIDSTSLYYANKVKDGKGILDTDTYIVVWTTTPFTVTASRGLTVGPDMEYVVVAPVGSERKYLLAEVLVDSLAAKFGWENFEIVTHHTGKELNHIVTEHPWDTEVEELVILGDHVTTDSGTGIVHTAPGFGEDDYNVGIANGLDVVVTVDSRGLMMENAGPDFEGQFYDKVTPLVKEKLGDLLLASEVINHSYPFDWRTKKPIIWRAVPQWFASVSKFRQEILDEIEKTNFQPEWGKKRLYNMIRDRGDWVISRQRAWGVPLPIFYAEDGTAIMTKEVTDHVADLFAEYGSIVWWQRDAKDLLPAGYTHPGSPNGLFEKETDIMDVWFDSGSSWNGVMNARENLSYPADLYLEGSDQYRGWFNSSLITSVAVNGHAPYKAVLSQGFVLDGKGEKMSKSLGNTILPSDVEKQFGAEILRLWVTSVDSSNDVRISMDILKQTSEIYRKIRNTLRFLIANTSDFNPKQDAVAYENLGAVDRYMTIKFNQVVDTINKAYAAYDFMAIYKAVVNFVTVDLSAFYLDFAKDVVYIEAANSPERRRMQTVFYDILVKLTKLLTPILPHTAEEIWSYLEHEEEEFVQLAEMPVAQTFSGQEEILEEWSAFMTLRTQAQKALEEARNAKVIGKSLEAHLTIYASQEVKTLLTALNSDIALLMIVSQLTIADEADKPADSVSFEGVAFTVEHAEGEVCERSRRIDPTTRMRSYGVAVCDASAAIIEQYYPEAVAQGFEA.

The 'HIGH' region motif lies at 57-67 (PYANGNIHVGH). Glutamate 554 contributes to the L-isoleucyl-5'-AMP binding site. The 'KMSKS' region signature appears at 595–599 (KMSKS). Lysine 598 provides a ligand contact to ATP.

Belongs to the class-I aminoacyl-tRNA synthetase family. IleS type 1 subfamily. In terms of assembly, monomer.

It localises to the cytoplasm. The enzyme catalyses tRNA(Ile) + L-isoleucine + ATP = L-isoleucyl-tRNA(Ile) + AMP + diphosphate. Functionally, catalyzes the attachment of isoleucine to tRNA(Ile). As IleRS can inadvertently accommodate and process structurally similar amino acids such as valine, to avoid such errors it has two additional distinct tRNA(Ile)-dependent editing activities. One activity is designated as 'pretransfer' editing and involves the hydrolysis of activated Val-AMP. The other activity is designated 'posttransfer' editing and involves deacylation of mischarged Val-tRNA(Ile). This is Isoleucine--tRNA ligase from Streptococcus agalactiae serotype III (strain NEM316).